Here is a 180-residue protein sequence, read N- to C-terminus: Large ribosomal subunit protein uL5 (180 aa).

Belongs to the universal ribosomal protein uL5 family. As to quaternary structure, part of the 50S ribosomal subunit; part of the 5S rRNA/L5/L18/L25 subcomplex. Contacts the 5S rRNA and the P site tRNA. Forms a bridge to the 30S subunit in the 70S ribosome.

This is one of the proteins that bind and probably mediate the attachment of the 5S RNA into the large ribosomal subunit, where it forms part of the central protuberance. In the 70S ribosome it contacts protein S13 of the 30S subunit (bridge B1b), connecting the 2 subunits; this bridge is implicated in subunit movement. Contacts the P site tRNA; the 5S rRNA and some of its associated proteins might help stabilize positioning of ribosome-bound tRNAs. The polypeptide is Large ribosomal subunit protein uL5 (Limosilactobacillus reuteri (strain DSM 20016) (Lactobacillus reuteri)).